We begin with the raw amino-acid sequence, 312 residues long: Olfactory receptor 2L13 (312 aa).

The Extracellular portion of the chain corresponds to 1–24 (MEKWNHTSNDFILLGLLPPNQTGI). 2 N-linked (GlcNAc...) asparagine glycosylation sites follow: N5 and N20. The helical transmembrane segment at 25-48 (FLLCLIILIFFLASVGNSAMIHLI) threads the bilayer. At 49-56 (HVDPRLHT) the chain is on the cytoplasmic side. Residues 57–78 (PMYFLLSQLSLMDLMYISTTVP) traverse the membrane as a helical segment. Residues 79-99 (KMAYNFLSGQKGISFLGCGVQ) lie on the Extracellular side of the membrane. A disulfide bridge links C96 with C188. Residues 100 to 119 (SFFFLTMACSEGLLLTSMAY) form a helical membrane-spanning segment. At 120-138 (DRYLAICHSLYYPIRMSKM) the chain is on the cytoplasmic side. A helical transmembrane segment spans residues 139–157 (MCVKMIGGSWTLGSINSLA). Residues 158-194 (HTVFALHIPYCRSRAIDHFFCDVPAMLLLACTDTWVY) lie on the Extracellular side of the membrane. A helical membrane pass occupies residues 195-218 (EYMVFVSTSLFLLFPFIGITSSCG). Over 219-235 (RVLFAVYHMHSKEGRKK) the chain is Cytoplasmic. A helical transmembrane segment spans residues 236-258 (AFTTISTHLTVVIFYYAPFVYTY). Over 259 to 271 (LRPRNLRSPAEDK) the chain is Extracellular. A helical membrane pass occupies residues 272 to 291 (ILAVFYTILTPMLNPIIYSL). The Cytoplasmic segment spans residues 292-312 (RNKEVLGAMRRVFGIFSFLKE).

It belongs to the G-protein coupled receptor 1 family.

The protein localises to the cell membrane. Its function is as follows. Odorant receptor. The protein is Olfactory receptor 2L13 (OR2L13) of Homo sapiens (Human).